A 129-amino-acid chain; its full sequence is Large ribosomal subunit protein uL22 (129 aa).

Belongs to the universal ribosomal protein uL22 family. As to quaternary structure, part of the 50S ribosomal subunit.

Functionally, this protein binds specifically to 23S rRNA; its binding is stimulated by other ribosomal proteins, e.g. L4, L17, and L20. It is important during the early stages of 50S assembly. It makes multiple contacts with different domains of the 23S rRNA in the assembled 50S subunit and ribosome. The globular domain of the protein is located near the polypeptide exit tunnel on the outside of the subunit, while an extended beta-hairpin is found that lines the wall of the exit tunnel in the center of the 70S ribosome. This is Large ribosomal subunit protein uL22 from Bartonella henselae (strain ATCC 49882 / DSM 28221 / CCUG 30454 / Houston 1) (Rochalimaea henselae).